The primary structure comprises 351 residues: Dihydroorotate dehydrogenase (quinone) (351 aa).

FMN-binding positions include 61–65 (AGLDK) and Thr-85. Residue Lys-65 coordinates substrate. Residue 110–114 (NRMGF) participates in substrate binding. Residues Asn-139 and Asn-172 each coordinate FMN. Asn-172 is a substrate binding site. Catalysis depends on Ser-175, which acts as the Nucleophile. Asn-177 contacts substrate. The FMN site is built by Lys-217 and Thr-245. 246-247 (NT) provides a ligand contact to substrate. Residues Gly-268, Gly-297, and 318 to 319 (YS) each bind FMN.

The protein belongs to the dihydroorotate dehydrogenase family. Type 2 subfamily. As to quaternary structure, monomer. It depends on FMN as a cofactor.

Its subcellular location is the cell membrane. The catalysed reaction is (S)-dihydroorotate + a quinone = orotate + a quinol. It functions in the pathway pyrimidine metabolism; UMP biosynthesis via de novo pathway; orotate from (S)-dihydroorotate (quinone route): step 1/1. In terms of biological role, catalyzes the conversion of dihydroorotate to orotate with quinone as electron acceptor. The protein is Dihydroorotate dehydrogenase (quinone) of Xanthomonas axonopodis pv. citri (strain 306).